The chain runs to 392 residues: NADH-quinone oxidoreductase subunit D 1 (392 aa).

It belongs to the complex I 49 kDa subunit family. As to quaternary structure, NDH-1 is composed of 14 different subunits. Subunits NuoB, C, D, E, F, and G constitute the peripheral sector of the complex.

The protein localises to the cell inner membrane. The enzyme catalyses a quinone + NADH + 5 H(+)(in) = a quinol + NAD(+) + 4 H(+)(out). Functionally, NDH-1 shuttles electrons from NADH, via FMN and iron-sulfur (Fe-S) centers, to quinones in the respiratory chain. The immediate electron acceptor for the enzyme in this species is believed to be a menaquinone. Couples the redox reaction to proton translocation (for every two electrons transferred, four hydrogen ions are translocated across the cytoplasmic membrane), and thus conserves the redox energy in a proton gradient. The chain is NADH-quinone oxidoreductase subunit D 1 from Cytophaga hutchinsonii (strain ATCC 33406 / DSM 1761 / CIP 103989 / NBRC 15051 / NCIMB 9469 / D465).